Consider the following 343-residue polypeptide: Biotin synthase 2 (343 aa).

Residues 58 to 285 enclose the Radical SAM core domain; it reads NEVQLSTLLS…LTMVRLSAGR (228 aa). [4Fe-4S] cluster-binding residues include Cys-73, Cys-77, and Cys-80. Positions 117, 148, 208, and 280 each coordinate [2Fe-2S] cluster.

The protein belongs to the radical SAM superfamily. Biotin synthase family. In terms of assembly, homodimer. Requires [4Fe-4S] cluster as cofactor. It depends on [2Fe-2S] cluster as a cofactor.

It carries out the reaction (4R,5S)-dethiobiotin + (sulfur carrier)-SH + 2 reduced [2Fe-2S]-[ferredoxin] + 2 S-adenosyl-L-methionine = (sulfur carrier)-H + biotin + 2 5'-deoxyadenosine + 2 L-methionine + 2 oxidized [2Fe-2S]-[ferredoxin]. It participates in cofactor biosynthesis; biotin biosynthesis; biotin from 7,8-diaminononanoate: step 2/2. Catalyzes the conversion of dethiobiotin (DTB) to biotin by the insertion of a sulfur atom into dethiobiotin via a radical-based mechanism. The sequence is that of Biotin synthase 2 from Polaromonas sp. (strain JS666 / ATCC BAA-500).